Here is a 110-residue protein sequence, read N- to C-terminus: Spermatid nuclear transition protein 3 (110 aa).

Residues 80-110 form a disordered region; that stretch reads RSCAREKLNQSRKRYQNMRQSQRRGQNQKRR.

It is found in the nucleus. The protein localises to the chromosome. In terms of biological role, involved in nuclear basic protein transition: histones are replaced by spermatid specific proteins which are themselves replaced by protamines in late spermatids. The chain is Spermatid nuclear transition protein 3 from Ovis aries (Sheep).